The primary structure comprises 348 residues: ECA polysaccharide chain length modulation protein (348 aa).

At 1–30 the chain is on the cytoplasmic side; it reads MTQPMPGKPAEDAENELDIRGLFRTLWAGK. The chain crosses the membrane as a helical span at residues 31–51; that stretch reads LWIIGMGLAFALIALAYTFFA. The Periplasmic portion of the chain corresponds to 52 to 322; sequence RQEWSSTAIT…EPVKRDSPRR (271 aa). Residues 323 to 343 traverse the membrane as a helical segment; that stretch reads AFLMIMWGIVGGLIGAGVALT. At 344 to 348 the chain is on the cytoplasmic side; sequence RRCSK.

This sequence belongs to the WzzB/Cld/Rol family. Homooctamer. Probably part of a complex composed of WzxE, WzyE and WzzE.

It localises to the cell inner membrane. Its pathway is bacterial outer membrane biogenesis; enterobacterial common antigen biosynthesis. Functionally, modulates the polysaccharide chain length of enterobacterial common antigen (ECA). The polypeptide is ECA polysaccharide chain length modulation protein (Escherichia coli O157:H7).